The chain runs to 128 residues: Sulfurtransferase TusD (128 aa).

Catalysis depends on Cys-78, which acts as the Cysteine persulfide intermediate.

The protein belongs to the DsrE/TusD family. In terms of assembly, heterohexamer, formed by a dimer of trimers. The hexameric TusBCD complex contains 2 copies each of TusB, TusC and TusD. The TusBCD complex interacts with TusE.

It localises to the cytoplasm. In terms of biological role, part of a sulfur-relay system required for 2-thiolation of 5-methylaminomethyl-2-thiouridine (mnm(5)s(2)U) at tRNA wobble positions. Accepts sulfur from TusA and transfers it in turn to TusE. The polypeptide is Sulfurtransferase TusD (Escherichia coli (strain 55989 / EAEC)).